The primary structure comprises 394 residues: Phosphopentomutase (394 aa).

6 residues coordinate Mn(2+): aspartate 14, aspartate 287, histidine 292, aspartate 328, histidine 329, and histidine 340.

Belongs to the phosphopentomutase family. It depends on Mn(2+) as a cofactor.

It localises to the cytoplasm. It catalyses the reaction 2-deoxy-alpha-D-ribose 1-phosphate = 2-deoxy-D-ribose 5-phosphate. The enzyme catalyses alpha-D-ribose 1-phosphate = D-ribose 5-phosphate. It participates in carbohydrate degradation; 2-deoxy-D-ribose 1-phosphate degradation; D-glyceraldehyde 3-phosphate and acetaldehyde from 2-deoxy-alpha-D-ribose 1-phosphate: step 1/2. Its function is as follows. Isomerase that catalyzes the conversion of deoxy-ribose 1-phosphate (dRib-1-P) and ribose 1-phosphate (Rib-1-P) to deoxy-ribose 5-phosphate (dRib-5-P) and ribose 5-phosphate (Rib-5-P), respectively. The polypeptide is Phosphopentomutase (Listeria monocytogenes serotype 4a (strain HCC23)).